A 121-amino-acid chain; its full sequence is Large ribosomal subunit protein eL8 (121 aa).

This sequence belongs to the eukaryotic ribosomal protein eL8 family. Part of the 50S ribosomal subunit. Probably part of the RNase P complex.

The protein resides in the cytoplasm. Multifunctional RNA-binding protein that recognizes the K-turn motif in ribosomal RNA, the RNA component of RNase P, box H/ACA, box C/D and box C'/D' sRNAs. The chain is Large ribosomal subunit protein eL8 from Thermoplasma acidophilum (strain ATCC 25905 / DSM 1728 / JCM 9062 / NBRC 15155 / AMRC-C165).